A 416-amino-acid polypeptide reads, in one-letter code: NADH-quinone oxidoreductase subunit D (416 aa).

This sequence belongs to the complex I 49 kDa subunit family. NDH-1 is composed of 14 different subunits. Subunits NuoB, C, D, E, F, and G constitute the peripheral sector of the complex.

The protein localises to the cell inner membrane. It carries out the reaction a quinone + NADH + 5 H(+)(in) = a quinol + NAD(+) + 4 H(+)(out). Functionally, NDH-1 shuttles electrons from NADH, via FMN and iron-sulfur (Fe-S) centers, to quinones in the respiratory chain. The immediate electron acceptor for the enzyme in this species is believed to be ubiquinone. Couples the redox reaction to proton translocation (for every two electrons transferred, four hydrogen ions are translocated across the cytoplasmic membrane), and thus conserves the redox energy in a proton gradient. The chain is NADH-quinone oxidoreductase subunit D from Caulobacter sp. (strain K31).